Reading from the N-terminus, the 507-residue chain is tRNA (guanine(6)-N(2))-methyltransferase THUMP3 (507 aa).

The THUMP domain occupies 165-285 (KIDQRNVKKE…DNEVIVGIAL (121 aa)).

Belongs to the methyltransferase superfamily. In terms of assembly, part of the heterodimeric THUMPD3-TRM112 methyltransferase complex; this complex forms an active tRNA methyltransferase, where TRMT112 acts as an activator of the catalytic subunit THUMPD3.

The protein localises to the cytoplasm. The catalysed reaction is guanosine(6) in tRNA + S-adenosyl-L-methionine = N(2)-methylguanosine(6) in tRNA + S-adenosyl-L-homocysteine + H(+). The enzyme catalyses guanosine(7) in tRNA + S-adenosyl-L-methionine = N(2)-methylguanosine(7) in tRNA + S-adenosyl-L-homocysteine + H(+). In terms of biological role, catalytic subunit of the THUMPD3-TRM112 methyltransferase complex, that specifically mediates the S-adenosyl-L-methionine-dependent N(2)-methylation of guanosine nucleotide at position 6 (m2G6) in tRNAs. This is one of the major tRNA (guanine-N(2))-methyltransferases. Also catalyzes the S-adenosyl-L-methionine-dependent N(2)-methylation of guanosine nucleotide at position 7 of tRNA(Trp). The sequence is that of tRNA (guanine(6)-N(2))-methyltransferase THUMP3 from Homo sapiens (Human).